The following is a 273-amino-acid chain: Putative phosphoenolpyruvate synthase regulatory protein (273 aa).

153–160 (GVSRSGKT) provides a ligand contact to ADP.

This sequence belongs to the pyruvate, phosphate/water dikinase regulatory protein family. PSRP subfamily.

It catalyses the reaction [pyruvate, water dikinase] + ADP = [pyruvate, water dikinase]-phosphate + AMP + H(+). The enzyme catalyses [pyruvate, water dikinase]-phosphate + phosphate + H(+) = [pyruvate, water dikinase] + diphosphate. Functionally, bifunctional serine/threonine kinase and phosphorylase involved in the regulation of the phosphoenolpyruvate synthase (PEPS) by catalyzing its phosphorylation/dephosphorylation. This Albidiferax ferrireducens (strain ATCC BAA-621 / DSM 15236 / T118) (Rhodoferax ferrireducens) protein is Putative phosphoenolpyruvate synthase regulatory protein.